The chain runs to 478 residues: Endoglucanase 18 (478 aa).

The first 21 residues, 1-21 (MGKLLVVMLIGMFLAFESLEA), serve as a signal peptide directing secretion. The N-linked (GlcNAc...) asparagine glycan is linked to N29. D76 serves as the catalytic Nucleophile. H398 is an active-site residue. The tract at residues 433–452 (HTGAIVGGPNSSDQYSDKRT) is disordered. N442 carries an N-linked (GlcNAc...) asparagine glycan. Residues D449 and E458 contribute to the active site.

Belongs to the glycosyl hydrolase 9 (cellulase E) family.

The protein localises to the secreted. The enzyme catalyses Endohydrolysis of (1-&gt;4)-beta-D-glucosidic linkages in cellulose, lichenin and cereal beta-D-glucans.. In Arabidopsis thaliana (Mouse-ear cress), this protein is Endoglucanase 18.